Here is a 607-residue protein sequence, read N- to C-terminus: Leucine-rich repeat-containing protein 63 (607 aa).

LRR repeat units lie at residues 357–378, 380–401, 403–424, 426–447, 449–470, 471–497, and 498–524; these read QLVYLNLSYNDLHQFPGEVLYL, NLQVLKLRNNPIREIPSEIQQL, YLRKFTIAFNFITSLPAGLFCL, YLEELDVSYNEIENIPNEIQKL, SLEKLTVDGTNITAFPPGILKL, NLVKLEFENTFTIPPFWLENSCNNPPR, and LTHICSLFIVKNNLHKILDYDPVVVQK.

This is Leucine-rich repeat-containing protein 63 (Lrrc63) from Rattus norvegicus (Rat).